The following is a 275-amino-acid chain: Glucan endo-1,3-beta-glucosidase, acidic isoform PR-N (275 aa).

Glu-196 serves as the catalytic Nucleophile.

Belongs to the glycosyl hydrolase 17 family. The N-terminus is blocked.

The protein resides in the secreted. The protein localises to the extracellular space. It carries out the reaction Hydrolysis of (1-&gt;3)-beta-D-glucosidic linkages in (1-&gt;3)-beta-D-glucans.. Functionally, implicated in the defense of plants against pathogens. The chain is Glucan endo-1,3-beta-glucosidase, acidic isoform PR-N (PRN) from Nicotiana tabacum (Common tobacco).